The chain runs to 152 residues: uncharacterized protein (152 aa).

This sequence belongs to the transposase 8 family.

This is an uncharacterized protein from Sinorhizobium fredii (strain NBRC 101917 / NGR234).